The chain runs to 131 residues: Glycine cleavage system H protein (131 aa).

The Lipoyl-binding domain occupies 24-106 (RVTVGISDHA…YGEGWMFVVE (83 aa)). N6-lipoyllysine is present on K65.

Belongs to the GcvH family. The glycine cleavage system is composed of four proteins: P, T, L and H. Requires (R)-lipoate as cofactor.

Its function is as follows. The glycine cleavage system catalyzes the degradation of glycine. The H protein shuttles the methylamine group of glycine from the P protein to the T protein. This chain is Glycine cleavage system H protein, found in Stenotrophomonas maltophilia (strain K279a).